We begin with the raw amino-acid sequence, 252 residues long: Sororin (252 aa).

2 disordered regions span residues 1 to 48 and 72 to 142; these read MSGR…WPKT and AVQS…SKKV. Phosphoserine occurs at positions 21, 33, 35, 75, 79, and 83. The segment covering 86–104 has biased composition (basic and acidic residues); sequence LEKENEPPGRELTKEDLFK. The KEN box signature appears at 88-90; sequence KEN. Position 98 is a phosphothreonine (T98). The segment covering 105 to 116 has biased composition (low complexity); it reads THSVPATPTSTP. Residue S107 is modified to Phosphoserine. A phosphothreonine mark is found at T111 and T115. Over residues 124-140 the composition is skewed to basic and acidic residues; it reads SSSKEGELDARDLEMSK. Residue S154 is modified to Phosphoserine. T159 carries the phosphothreonine modification. Residues 166–168 carry the FGF motif motif; sequence FGF. The segment at 199-222 is disordered; sequence WAPDMTLPGISPPPEKQKRKKKKM. S209 is modified (phosphoserine). The interval 230–252 is C-terminal Sororin domain; it reads LDEWAAAMNAEFEAAEQFDLLVE.

It belongs to the sororin family. In terms of assembly, interacts with the APC/C complex. Interacts with the chromatin-bound cohesin complex; the interaction is indirect, occurs after DNA replication and requires acetylation of the cohesin component SMC3. Interacts (via the FGF motif) with PDS5A and PDS5B; the interaction is direct and prevents the interaction of PDS5A with WAPL. Post-translationally, phosphorylated. Phosphorylation, as cells enter mitosis, disrupts the interaction with PDS5A and relieves the inhibition of WAPL by CDCA5. In terms of processing, ubiquitinated by the APC/C complex in G1, leading to its degradation.

The protein localises to the nucleus. It is found in the chromosome. Its subcellular location is the cytoplasm. Its function is as follows. Regulator of sister chromatid cohesion in mitosis stabilizing cohesin complex association with chromatin. May antagonize the action of WAPL which stimulates cohesin dissociation from chromatin. Cohesion ensures that chromosome partitioning is accurate in both meiotic and mitotic cells and plays an important role in DNA repair. Required for efficient DNA double-stranded break repair. In Homo sapiens (Human), this protein is Sororin (CDCA5).